The sequence spans 501 residues: IQ domain-containing protein M (501 aa).

Residues 237–247 (ERQPIKPEPKS) show a composition bias toward basic and acidic residues. Residues 237 to 262 (ERQPIKPEPKSQPRIKGTPNKTDKLD) are disordered. In terms of domain architecture, IQ spans 290-319 (LIRMVTVMQAHVRGWLERKRLQRVMTKALD).

In Homo sapiens (Human), this protein is IQ domain-containing protein M.